Consider the following 1873-residue polypeptide: MEEGVQAPDWDSDETVIEGSVTESDLEEKELPWRRLLFDQDASLKSEFSLHPDTRGMCKGMPSPEIQLGFKLREDLQEQMNKNKMMPVLSEDTILQSQDETERNQALLQTRKNCSMFIGSFRQSGLSLNHQNIEGPEAESPEVLPHIEKELSEGRDSPEVSLLSGTAITVSDTVAVKETSLVEPEKILAAPNTFFEPRKEVTMTMTSEETKDEESSLETFVSALESLLTSPESTQEERLFELVSDFDRKELMNPLSDSLSSISIPLNSWSACHRDLLEDAKDDALPAELLEALNTLSEAKVETICHRKEGGSSLIARNECLEVEFNTSQTNEDCTQIAETLQDPNPSGLQTLAHQNITSCEPLSNKRNSNSVTNSSDQETACVLRRSSRLEKLKVSRDAKYSDHMYKMPEKILPKILGCEDLTNNNSSAQNFRMQDPALMIDGKEKNMHSARFKNGKQIRKNEQFSGKKEKMKVNKISLHSINRRNIFGENLVYKAALHDDADLVHHCIKKGGNVNQPSYAGWTALHEASVGGFYRTASELLKGGADVNIKGLYQITPLHDAVMNGHYKVAELLLLNGADPLFRNDDGKCALDEAKDLCMKRLLERYIPKHQKCLTSAQRSSIDPLDIEDVYQHKKPKFSSKSHIWHVYNENSNRQKLEHVKVNKGSKASLFINKEDVYEYYQKDPKNTKFGKSKHKQSTLDQIYSTGLRKGNLHNVKDPNTNVPKGIGRRKTQHKRTQVDDVDCNPRKILAVSPSRRINRLVTYQQHIPETHNDLPEELCEPSSLTLSSLRNGLDSSTEACSVSKEKHIQNLDLSDSQEVQCLELESVDQTEAVSFPGLLLHKEIKLPVVTTDKQPHTLQEQHHVLYKSHENSNLVPKDERFNKWENSFLSFVKENSDNDDDDDCSTSEKAITSKKVLCSTGGKKHYNFKENLTNKKEMGFQQFLLSEDHLSQENELKAVSLTTLPEQEAVNFSYSDNAVISEHVANYEQCIFGPSFDHSNGNPEQNSLACMRTLLTHEASKLTNHVELFKKPQDYIPRAPTFLMNQTDTHIVEKMAKNCDTERNYIDRDQKIIYSNEPLSIVAHSQVIETTKVEKRRQNHLESETIHNIDSHSTDNMSKELANISKLSQREKKEISHKPGMKAGRINKRNARGESQLHLAVRRGNLPLVKALIESGADVNLNDNAGWTPLHEASNEGSIDIIVELLKAGAKVNCENIDGILPLHDAVANNHLKAAEILLQNGANPNQKDQKQKSALDEADDEKMKELLRSYGAIETVNRDESDAIVNEKIPAVRSKRHKQCFCDDGKTIDSSSLSHQERSRESLSVHQTLSAILQDIEEKQEYLLEFEIRNPEDAEQYIEKMLKIKKIMDNVLAKQKAERDDLAKKYRVSIESFKHGALREQLANLAARQKSLLVVAKKQKKISLKIQNCRNVTSLPCLSLRKLPPRSEISSEKDSQELTSLENLEHPQSGSLSPVSGSMQETQLSLETWNYSQNTNICLNSEAVRRGEFSGNDMNSKQNGSDCTLDGFPKSRHSDGTEKNKLPSQPVAFIGQTEYSQKENDLTEATDKDHEFYVSSPVIGKLNISETASVLAENAAHPSNIICDQDLSNYDPKRGNRKTSSQQSPTGASESLAHQGIAVLGSDTVHQMKPYLKKSVSVVPCADDSQISSSSGSGQQDTIKKALNYSTAPKKKCIQIKDLILLGRINPGNNILEFKTQETTHKASILLNGKLKVESGQIYKNPVTWLKDLLGGNSYVTWNYAWSKVTYLGKELLRYVSEDAPILPEPNSVPQQYQPCLPEVACLDDPVQEPNKSMFEKTKFGQGTSRESMQSSPRYLQINEILLISDQEFLPCHIMDQHWKFCVECEELTP.

2 disordered regions span residues Met1–Glu27 and Glu361–Thr380. The span at Glu361–Glu379 shows a compositional bias: polar residues. 3 ANK repeats span residues Phe488–Gln517, Ala521–Ile550, and Tyr554–Phe583. The segment at Thr707–Val740 is disordered. Residues Ile728–Arg737 show a composition bias toward basic residues. ANK repeat units follow at residues Arg1154 to Leu1183, Ala1187 to Cys1216, and Asp1220 to Gln1249. Disordered stretches follow at residues Gln1242–Asp1263, Arg1449–Met1482, Phe1512–Pro1549, and Cys1606–Ser1634. Over residues Lys1250–Asp1263 the composition is skewed to basic and acidic residues. 2 stretches are compositionally biased toward polar residues: residues Glu1460–Met1482 and Asn1515–Asp1525. Over residues Arg1535–Lys1544 the composition is skewed to basic and acidic residues. Residues Lys1621–Ser1632 show a composition bias toward polar residues. The region spanning Lys1683–Tyr1778 is the RAMA domain.

Interacts with REC114; the interaction is direct. Interacts with IHO1.

It is found in the nucleus. The protein localises to the chromosome. In terms of biological role, required for DNA double-strand breaks (DSBs) formation during meiotic recombination. Regulates the spatial and temporal patterns of pre-DSB recombinosome assembly and recombination activity by acting as a scaffold that anchors REC114 and other factors to specific genomic locations, thereby regulating DSB formation. Plays a key role in recombination in the pseudoautosomal regions of sex chromosomes. In Homo sapiens (Human), this protein is Ankyrin repeat domain-containing protein 31.